The chain runs to 173 residues: NADH-ubiquinone oxidoreductase chain 6 (173 aa).

Transmembrane regions (helical) follow at residues 12 to 32 (VFWL…VSLV), 47 to 67 (GSFL…VIFA), 94 to 114 (VVLA…GECG), and 142 to 162 (GALM…LVLV).

The protein belongs to the complex I subunit 6 family.

The protein localises to the mitochondrion membrane. It carries out the reaction a ubiquinone + NADH + 5 H(+)(in) = a ubiquinol + NAD(+) + 4 H(+)(out). In terms of biological role, core subunit of the mitochondrial membrane respiratory chain NADH dehydrogenase (Complex I) that is believed to belong to the minimal assembly required for catalysis. Complex I functions in the transfer of electrons from NADH to the respiratory chain. The immediate electron acceptor for the enzyme is believed to be ubiquinone. The protein is NADH-ubiquinone oxidoreductase chain 6 (MT-ND6) of Pelomedusa subrufa (African side-necked turtle).